Consider the following 870-residue polypeptide: Leucine--tRNA ligase (870 aa).

Residues 42–52 carry the 'HIGH' region motif; sequence PYPSGKLHMGH. Positions 629 to 633 match the 'KMSKS' region motif; sequence KMSKS. K632 contributes to the ATP binding site.

It belongs to the class-I aminoacyl-tRNA synthetase family.

Its subcellular location is the cytoplasm. It catalyses the reaction tRNA(Leu) + L-leucine + ATP = L-leucyl-tRNA(Leu) + AMP + diphosphate. The chain is Leucine--tRNA ligase from Ectopseudomonas mendocina (strain ymp) (Pseudomonas mendocina).